Reading from the N-terminus, the 390-residue chain is Probable tRNA pseudouridine synthase D (390 aa).

The active-site Nucleophile is the Asp-93. The region spanning 166–353 is the TRUD domain; it reads YVLNYYGIQR…YGTRRKMITP (188 aa).

Belongs to the pseudouridine synthase TruD family.

It catalyses the reaction uridine(13) in tRNA = pseudouridine(13) in tRNA. In terms of biological role, could be responsible for synthesis of pseudouridine from uracil-13 in transfer RNAs. The polypeptide is Probable tRNA pseudouridine synthase D (Methanococcus maripaludis (strain C5 / ATCC BAA-1333)).